Here is a 425-residue protein sequence, read N- to C-terminus: Protein-glutamate methylesterase/protein-glutamine glutaminase (425 aa).

A Response regulatory domain is found at 22–140 (RVMVVDDSVV…EVAAADIFRH (119 aa)). At Asp-73 the chain carries 4-aspartylphosphate. Disordered regions lie at residues 150–174 (AAKRRRPATVASPPPDHDDYGSNAS) and 203–223 (VQREQQPRSAQAARAMSRPQP). Positions 221-417 (PQPTLRSFSA…PLQQIAPKLV (197 aa)) constitute a CheB-type methylesterase domain. Residues Ser-241, His-269, and Asp-365 contribute to the active site.

This sequence belongs to the CheB family. Post-translationally, phosphorylated by CheA. Phosphorylation of the N-terminal regulatory domain activates the methylesterase activity.

It is found in the cytoplasm. It carries out the reaction [protein]-L-glutamate 5-O-methyl ester + H2O = L-glutamyl-[protein] + methanol + H(+). It catalyses the reaction L-glutaminyl-[protein] + H2O = L-glutamyl-[protein] + NH4(+). Functionally, involved in chemotaxis. Part of a chemotaxis signal transduction system that modulates chemotaxis in response to various stimuli. Catalyzes the demethylation of specific methylglutamate residues introduced into the chemoreceptors (methyl-accepting chemotaxis proteins or MCP) by CheR. Also mediates the irreversible deamidation of specific glutamine residues to glutamic acid. The protein is Protein-glutamate methylesterase/protein-glutamine glutaminase of Nitrobacter winogradskyi (strain ATCC 25391 / DSM 10237 / CIP 104748 / NCIMB 11846 / Nb-255).